Reading from the N-terminus, the 197-residue chain is Recombination protein RecR (197 aa).

A C4-type zinc finger spans residues 56-71 (CPVCGTLDTRAPCSIC). In terms of domain architecture, Toprim spans 79 to 174 (TLICVVRDVA…TVSGLAQGVP (96 aa)).

This sequence belongs to the RecR family.

May play a role in DNA repair. It seems to be involved in an RecBC-independent recombinational process of DNA repair. It may act with RecF and RecO. The sequence is that of Recombination protein RecR from Rhodospirillum rubrum (strain ATCC 11170 / ATH 1.1.1 / DSM 467 / LMG 4362 / NCIMB 8255 / S1).